A 156-amino-acid polypeptide reads, in one-letter code: 6,7-dimethyl-8-ribityllumazine synthase (156 aa).

5-amino-6-(D-ribitylamino)uracil-binding positions include F22, 57-59 (AYE), and 81-83 (TVI). Residue 86–87 (GT) coordinates (2S)-2-hydroxy-3-oxobutyl phosphate. H89 functions as the Proton donor in the catalytic mechanism. Residue F114 participates in 5-amino-6-(D-ribitylamino)uracil binding. Residue R128 coordinates (2S)-2-hydroxy-3-oxobutyl phosphate.

Belongs to the DMRL synthase family. Forms an icosahedral capsid composed of 60 subunits, arranged as a dodecamer of pentamers.

It carries out the reaction (2S)-2-hydroxy-3-oxobutyl phosphate + 5-amino-6-(D-ribitylamino)uracil = 6,7-dimethyl-8-(1-D-ribityl)lumazine + phosphate + 2 H2O + H(+). Its pathway is cofactor biosynthesis; riboflavin biosynthesis; riboflavin from 2-hydroxy-3-oxobutyl phosphate and 5-amino-6-(D-ribitylamino)uracil: step 1/2. Catalyzes the formation of 6,7-dimethyl-8-ribityllumazine by condensation of 5-amino-6-(D-ribitylamino)uracil with 3,4-dihydroxy-2-butanone 4-phosphate. This is the penultimate step in the biosynthesis of riboflavin. The sequence is that of 6,7-dimethyl-8-ribityllumazine synthase from Yersinia enterocolitica serotype O:8 / biotype 1B (strain NCTC 13174 / 8081).